The following is a 672-amino-acid chain: DNA ligase (672 aa).

NAD(+) is bound by residues 32 to 36, 81 to 82, and glutamate 113; these read DAEYD and SL. The N6-AMP-lysine intermediate role is filled by lysine 115. The NAD(+) site is built by arginine 136, glutamate 173, lysine 290, and lysine 314. Zn(2+)-binding residues include cysteine 408, cysteine 411, cysteine 426, and cysteine 432. The region spanning 592 to 672 is the BRCT domain; it reads EIDSPFAGKT…EMIRLLGESS (81 aa).

It belongs to the NAD-dependent DNA ligase family. LigA subfamily. The cofactor is Mg(2+). Requires Mn(2+) as cofactor.

It carries out the reaction NAD(+) + (deoxyribonucleotide)n-3'-hydroxyl + 5'-phospho-(deoxyribonucleotide)m = (deoxyribonucleotide)n+m + AMP + beta-nicotinamide D-nucleotide.. In terms of biological role, DNA ligase that catalyzes the formation of phosphodiester linkages between 5'-phosphoryl and 3'-hydroxyl groups in double-stranded DNA using NAD as a coenzyme and as the energy source for the reaction. It is essential for DNA replication and repair of damaged DNA. This Yersinia enterocolitica serotype O:8 / biotype 1B (strain NCTC 13174 / 8081) protein is DNA ligase.